The primary structure comprises 611 residues: Procollagen galactosyltransferase 1-A (611 aa).

A signal peptide spans 1-24; that stretch reads MSQAGVDRLLRGLQLLLLVLRLSA. N-linked (GlcNAc...) asparagine glycans are attached at residues N85, N173, N312, N370, and N568. Residues 575–591 are compositionally biased toward basic and acidic residues; it reads WDRAKSRKTQQQEKLRS. A disordered region spans residues 575–611; sequence WDRAKSRKTQQQEKLRSEALNSPSLGSPFDNTARDEL. Residues 608–611 carry the Prevents secretion from ER motif; it reads RDEL.

It belongs to the glycosyltransferase 25 family.

Its subcellular location is the endoplasmic reticulum lumen. It catalyses the reaction (5R)-5-hydroxy-L-lysyl-[collagen] + UDP-alpha-D-galactose = (5R)-5-O-(beta-D-galactosyl)-5-hydroxy-L-lysyl-[collagen] + UDP + H(+). Functionally, beta-galactosyltransferase that transfers beta-galactose to hydroxylysine residues of type I collagen. By acting on collagen glycosylation, facilitates the formation of collagen triple helix. The chain is Procollagen galactosyltransferase 1-A (colgalt1-a) from Xenopus laevis (African clawed frog).